The chain runs to 155 residues: MSRRGTAEEKTAKSDPIYRNRLVNMLVNRILKHGKKSLAYQIIYRALKKIQQKTETNPLSVLRQAICGVTPDIAVKARRVGGSTHQVPIEIGSTQGKALAIRWLLWASRKRPGRNMAFKLSSELVDAAKGSGDAIRKKEETHRMAEANRAFAHFR.

Belongs to the universal ribosomal protein uS7 family. As to quaternary structure, part of the 30S ribosomal subunit.

The protein localises to the plastid. The protein resides in the chloroplast. One of the primary rRNA binding proteins, it binds directly to 16S rRNA where it nucleates assembly of the head domain of the 30S subunit. The sequence is that of Small ribosomal subunit protein uS7c (rps7) from Hydrastis canadensis (Goldenseal).